Here is a 151-residue protein sequence, read N- to C-terminus: UPF0756 membrane protein lhv_0995 (151 aa).

Helical transmembrane passes span 4 to 24 (WLFLALVLVVALVGKNMSLII), 25 to 45 (ATGVVMALKLIPFASKWLPVI), 52 to 72 (WGVTVISVAILIPVATGQIGF), 78 to 98 (TFKSPAGWIAILAGIAVAILS), and 115 to 135 (LVLGTIIGVVVFKGVAAGPVI).

Belongs to the UPF0756 family.

The protein resides in the cell membrane. This chain is UPF0756 membrane protein lhv_0995, found in Lactobacillus helveticus (strain DPC 4571).